Consider the following 466-residue polypeptide: 3-isopropylmalate dehydratase large subunit (466 aa).

Positions 347, 407, and 410 each coordinate [4Fe-4S] cluster.

The protein belongs to the aconitase/IPM isomerase family. LeuC type 1 subfamily. As to quaternary structure, heterodimer of LeuC and LeuD. [4Fe-4S] cluster serves as cofactor.

It carries out the reaction (2R,3S)-3-isopropylmalate = (2S)-2-isopropylmalate. Its pathway is amino-acid biosynthesis; L-leucine biosynthesis; L-leucine from 3-methyl-2-oxobutanoate: step 2/4. Catalyzes the isomerization between 2-isopropylmalate and 3-isopropylmalate, via the formation of 2-isopropylmaleate. In Escherichia fergusonii (strain ATCC 35469 / DSM 13698 / CCUG 18766 / IAM 14443 / JCM 21226 / LMG 7866 / NBRC 102419 / NCTC 12128 / CDC 0568-73), this protein is 3-isopropylmalate dehydratase large subunit.